Reading from the N-terminus, the 203-residue chain is Cilia- and flagella-associated protein 20 (203 aa).

This sequence belongs to the CFAP20 family.

The protein resides in the nucleus. The protein localises to the cytoplasm. It is found in the cytoskeleton. It localises to the microtubule organizing center. Its subcellular location is the centrosome. The protein resides in the centriole. The protein localises to the cilium basal body. It is found in the cilium axoneme. In terms of biological role, cilium- and flagellum-specific protein that plays a role in axonemal structure organization and motility. Microtubule inner protein (MIP) part of the dynein-decorated doublet microtubules (DMTs) in cilia axoneme, which is required for motile cilia beating. Involved in the regulation of the size and morphology of cilia. Required for axonemal microtubules polyglutamylation. The polypeptide is Cilia- and flagella-associated protein 20 (Caenorhabditis briggsae).